Reading from the N-terminus, the 310-residue chain is MEFKHVSVLLDECINALNIKEDGIYVDCTLGGAGHSSEIVKRLSSDGRLIGFDQDKDALKAAGERLKDYKNVTYVHSNFYAIYDVLTDLGIDGVDGILMDLGVSSYQLDNGERGFSYMQDAPLDMRMNRENEFSAYEIVNTYSEEELYRIIKEYGEEKFAKRIASFIVKNREEKNIETTLELVEIIKAAIPAKARREGPHPAKRTFQAIRIEVNKELEIISKTILDGVKKLNKGGRMAIITFHSLEDRIVKNTFKELANPCTCPSEFPVCVCNRKPEVKLISRKPIEASKEELEFNPRSRSAKLRIIEKL.

Residues 33–35 (AGH), Asp53, Tyr83, Asp100, and Gln107 each bind S-adenosyl-L-methionine.

Belongs to the methyltransferase superfamily. RsmH family.

The protein resides in the cytoplasm. It carries out the reaction cytidine(1402) in 16S rRNA + S-adenosyl-L-methionine = N(4)-methylcytidine(1402) in 16S rRNA + S-adenosyl-L-homocysteine + H(+). In terms of biological role, specifically methylates the N4 position of cytidine in position 1402 (C1402) of 16S rRNA. The protein is Ribosomal RNA small subunit methyltransferase H of Clostridium perfringens (strain ATCC 13124 / DSM 756 / JCM 1290 / NCIMB 6125 / NCTC 8237 / Type A).